The chain runs to 349 residues: Homoserine O-succinyltransferase (349 aa).

Residue Cys146 is the Acyl-thioester intermediate of the active site. 2 residues coordinate substrate: Lys167 and Ser196. The Proton acceptor role is filled by His239. Glu241 is an active-site residue. Arg253 provides a ligand contact to substrate.

It belongs to the MetA family.

It is found in the cytoplasm. It carries out the reaction L-homoserine + succinyl-CoA = O-succinyl-L-homoserine + CoA. Its pathway is amino-acid biosynthesis; L-methionine biosynthesis via de novo pathway; O-succinyl-L-homoserine from L-homoserine: step 1/1. In terms of biological role, transfers a succinyl group from succinyl-CoA to L-homoserine, forming succinyl-L-homoserine. In vitro, can also use glutaryl-CoA as acyl donor. This chain is Homoserine O-succinyltransferase, found in Thiobacillus denitrificans (strain ATCC 25259 / T1).